The sequence spans 85 residues: Large ribosomal subunit protein bL27 (85 aa).

Belongs to the bacterial ribosomal protein bL27 family.

The sequence is that of Large ribosomal subunit protein bL27 from Vesicomyosocius okutanii subsp. Calyptogena okutanii (strain HA).